A 940-amino-acid polypeptide reads, in one-letter code: UvrABC system protein A (940 aa).

31–38 is an ATP binding site; sequence GLSGSGKS. A C4-type zinc finger spans residues 253–280; that stretch reads CPICGYSMRELEPRLFSFNNPAGACPTC. 2 ABC transporter domains span residues 310–587 and 607–937; these read WDRR…PESL and ANPE…RFLK. 640–647 lines the ATP pocket; that stretch reads GVSGSGKS. The C4-type zinc finger occupies 740–766; the sequence is CEACQGDGVIKVEMHFLPDIYVPCDQC.

This sequence belongs to the ABC transporter superfamily. UvrA family. As to quaternary structure, forms a heterotetramer with UvrB during the search for lesions. Interacts with TRCF (Mfd). UvrB and TRCF binding to UvrA could be mutually exclusive.

Its subcellular location is the cytoplasm. The UvrABC repair system catalyzes the recognition and processing of DNA lesions. UvrA is an ATPase and a DNA-binding protein. A damage recognition complex composed of 2 UvrA and 2 UvrB subunits scans DNA for abnormalities. When the presence of a lesion has been verified by UvrB, the UvrA molecules dissociate. The protein is UvrABC system protein A of Escherichia coli (strain K12).